We begin with the raw amino-acid sequence, 359 residues long: DNA replication and repair protein RecF (359 aa).

30–37 provides a ligand contact to ATP; the sequence is GPNAKGKT.

The protein belongs to the RecF family.

It is found in the cytoplasm. The RecF protein is involved in DNA metabolism; it is required for DNA replication and normal SOS inducibility. RecF binds preferentially to single-stranded, linear DNA. It also seems to bind ATP. This Protochlamydia amoebophila (strain UWE25) protein is DNA replication and repair protein RecF.